A 297-amino-acid polypeptide reads, in one-letter code: Cyclin-dependent kinase 1 (297 aa).

An N-acetylmethionine modification is found at methionine 1. Tyrosine 4 is modified (phosphotyrosine; by PKR). The region spanning tyrosine 4–phenylalanine 287 is the Protein kinase domain. N6-acetyllysine; alternate occurs at positions 6 and 9. Glycyl lysine isopeptide (Lys-Gly) (interchain with G-Cter in SUMO2); alternate cross-links involve residues lysine 6 and lysine 9. Residue isoleucine 10–valine 18 participates in ATP binding. Threonine 14 is modified (phosphothreonine; by PKMYT1). At tyrosine 15 the chain carries Phosphotyrosine; by PKMYT1, WEE1 and WEE2. At tyrosine 15 the chain carries Phosphotyrosine; by WEE1 and WEE2. Tyrosine 19 carries the phosphotyrosine modification. Lysine 20 is covalently cross-linked (Glycyl lysine isopeptide (Lys-Gly) (interchain with G-Cter in SUMO2)). Lysine 33 lines the ATP pocket. Serine 39 is modified (phosphoserine). A Phosphotyrosine modification is found at tyrosine 77. Aspartate 128 (proton acceptor) is an active-site residue. Lysine 139 is covalently cross-linked (Glycyl lysine isopeptide (Lys-Gly) (interchain with G-Cter in SUMO2)). Residue threonine 141 is modified to Phosphothreonine. Residue threonine 161 is modified to Phosphothreonine; by CAK. Serine 178 is modified (phosphoserine). Threonine 222 carries the phosphothreonine modification. N6-succinyllysine is present on lysine 245. Serine 248 carries the phosphoserine modification.

This sequence belongs to the protein kinase superfamily. CMGC Ser/Thr protein kinase family. CDC2/CDKX subfamily. As to quaternary structure, forms a stable but non-covalent complex with a regulatory subunit and with a cyclin. Interacts with cyclins-B (CCNB1, CCNB2 and CCNB3) to form a serine/threonine kinase holoenzyme complex also known as maturation promoting factor (MPF). The cyclin subunit imparts substrate specificity to the complex. Can also form CDK1-cylin-D and CDK1-cyclin-E complexes that phosphorylate RB1 in vitro. Binds to RB1 and other transcription factors such as FOXO1 and RUNX2. Promotes G2-M transition when in complex with a cyclin-B. Interacts with DLGAP5. Binds to the CDK inhibitors CDKN1A/p21 and CDKN1B/p27. Isoform 2 is unable to complex with cyclin-B1 and also fails to bind to CDKN1A/p21. Interacts with catalytically active CCNB1 and RALBP1 during mitosis to form an endocytotic complex during interphase. Associates with cyclins-A and B1 during S-phase in regenerating hepatocytes. Interacts with FANCC. Interacts with CEP63; this interaction recruits CDK1 to centrosomes. Interacts with CENPA. Interacts with NR1D1. Interacts with proteasome subunit PSMA8; to participate in meiosis progression during spermatogenesis. Post-translationally, phosphorylation at Thr-161 by CAK/CDK7 activates kinase activity. Phosphorylation at Thr-14 and Tyr-15 by PKMYT1 prevents nuclear translocation. Phosphorylation at Tyr-15 by WEE1 and WEE2 inhibits the protein kinase activity and acts as a negative regulator of entry into mitosis (G2 to M transition). Phosphorylation by PKMYT1 and WEE1 takes place during mitosis to keep CDK1-cyclin-B complexes inactive until the end of G2. By the end of G2, PKMYT1 and WEE1 are inactivated, but CDC25A and CDC25B are activated. Dephosphorylation by active CDC25A and CDC25B at Thr-14 and Tyr-15, leads to CDK1 activation at the G2-M transition. Phosphorylation at Tyr-15 by WEE2 during oogenesis is required to maintain meiotic arrest in oocytes during the germinal vesicle (GV) stage, a long period of quiescence at dictyate prophase I, leading to prevent meiotic reentry. Phosphorylation by WEE2 is also required for metaphase II exit during egg activation to ensure exit from meiosis in oocytes and promote pronuclear formation. Phosphorylated at Tyr-4 by PKR/EIF2AK2 upon genotoxic stress. This phosphorylation triggers CDK1 polyubiquitination and subsequent proteolysis, thus leading to G2 arrest. In terms of processing, polyubiquitinated upon genotoxic stress.

The protein resides in the nucleus. It localises to the cytoplasm. Its subcellular location is the mitochondrion. It is found in the cytoskeleton. The protein localises to the microtubule organizing center. The protein resides in the centrosome. It localises to the spindle. The enzyme catalyses L-seryl-[protein] + ATP = O-phospho-L-seryl-[protein] + ADP + H(+). It catalyses the reaction L-threonyl-[protein] + ATP = O-phospho-L-threonyl-[protein] + ADP + H(+). It carries out the reaction [DNA-directed RNA polymerase] + ATP = phospho-[DNA-directed RNA polymerase] + ADP + H(+). Its activity is regulated as follows. Phosphorylation at Thr-14 or Tyr-15 inactivates the enzyme, while phosphorylation at Thr-161 activates it. Activated through a multistep process; binding to cyclin-B is required for relocation of cyclin-kinase complexes to the nucleus, activated by CAK/CDK7-mediated phosphorylation on Thr-161, and CDC25-mediated dephosphorylation of inhibitory phosphorylation on Thr-14 and Tyr-15. Activity is restricted during S-phase in an ATR-dependent manner to prevent premature entry into G2. Repressed by the CDK inhibitors CDKN1A/p21 and CDKN1B/p27 during the G1 phase and by CDKN1A/p21 at the G1-S checkpoint upon DNA damage. Transient activation by rapid and transient dephosphorylation at Tyr-15 triggered by TGFB1. Its function is as follows. Plays a key role in the control of the eukaryotic cell cycle by modulating the centrosome cycle as well as mitotic onset; promotes G2-M transition via association with multiple interphase cyclins. Phosphorylates PARVA/actopaxin, APC, AMPH, APC, BARD1, Bcl-xL/BCL2L1, BRCA2, CALD1, CASP8, CDC7, CDC20, CDC25A, CDC25C, CC2D1A, CENPA, CSNK2 proteins/CKII, FZR1/CDH1, CDK7, CEBPB, CHAMP1, DMD/dystrophin, EEF1 proteins/EF-1, EZH2, KIF11/EG5, EGFR, FANCG, FOS, GFAP, GOLGA2/GM130, GRASP1, UBE2A/hHR6A, HIST1H1 proteins/histone H1, HMGA1, HIVEP3/KRC, KAT5, LMNA, LMNB, LBR, LATS1, MAP1B, MAP4, MARCKS, MCM2, MCM4, MKLP1, MLST8, MYB, NEFH, NFIC, NPC/nuclear pore complex, PITPNM1/NIR2, NPM1, NCL, NUCKS1, NPM1/numatrin, ORC1, PRKAR2A, EEF1E1/p18, EIF3F/p47, p53/TP53, NONO/p54NRB, PAPOLA, PLEC/plectin, RB1, TPPP, UL40/R2, RAB4A, RAP1GAP, RBBP8/CtIP, RCC1, RPS6KB1/S6K1, KHDRBS1/SAM68, ESPL1, SKI, BIRC5/survivin, STIP1, TEX14, beta-tubulins, MAPT/TAU, NEDD1, VIM/vimentin, TK1, FOXO1, RUNX1/AML1, SAMHD1, SIRT2, CGAS and RUNX2. CDK1/CDC2-cyclin-B controls pronuclear union in interphase fertilized eggs. Essential for early stages of embryonic development. During G2 and early mitosis, CDC25A/B/C-mediated dephosphorylation activates CDK1/cyclin complexes which phosphorylate several substrates that trigger at least centrosome separation, Golgi dynamics, nuclear envelope breakdown and chromosome condensation. Once chromosomes are condensed and aligned at the metaphase plate, CDK1 activity is switched off by WEE1- and PKMYT1-mediated phosphorylation to allow sister chromatid separation, chromosome decondensation, reformation of the nuclear envelope and cytokinesis. Phosphorylates KRT5 during prometaphase and metaphase. Inactivated by PKR/EIF2AK2- and WEE1-mediated phosphorylation upon DNA damage to stop cell cycle and genome replication at the G2 checkpoint thus facilitating DNA repair. Reactivated after successful DNA repair through WIP1-dependent signaling leading to CDC25A/B/C-mediated dephosphorylation and restoring cell cycle progression. Catalyzes lamin (LMNA, LMNB1 and LMNB2) phosphorylation at the onset of mitosis, promoting nuclear envelope breakdown. In proliferating cells, CDK1-mediated FOXO1 phosphorylation at the G2-M phase represses FOXO1 interaction with 14-3-3 proteins and thereby promotes FOXO1 nuclear accumulation and transcription factor activity, leading to cell death of postmitotic neurons. The phosphorylation of beta-tubulins regulates microtubule dynamics during mitosis. NEDD1 phosphorylation promotes PLK1-mediated NEDD1 phosphorylation and subsequent targeting of the gamma-tubulin ring complex (gTuRC) to the centrosome, an important step for spindle formation. In addition, CC2D1A phosphorylation regulates CC2D1A spindle pole localization and association with SCC1/RAD21 and centriole cohesion during mitosis. The phosphorylation of Bcl-xL/BCL2L1 after prolongated G2 arrest upon DNA damage triggers apoptosis. In contrast, CASP8 phosphorylation during mitosis prevents its activation by proteolysis and subsequent apoptosis. This phosphorylation occurs in cancer cell lines, as well as in primary breast tissues and lymphocytes. EZH2 phosphorylation promotes H3K27me3 maintenance and epigenetic gene silencing. CALD1 phosphorylation promotes Schwann cell migration during peripheral nerve regeneration. CDK1-cyclin-B complex phosphorylates NCKAP5L and mediates its dissociation from centrosomes during mitosis. Regulates the amplitude of the cyclic expression of the core clock gene BMAL1 by phosphorylating its transcriptional repressor NR1D1, and this phosphorylation is necessary for SCF(FBXW7)-mediated ubiquitination and proteasomal degradation of NR1D1. Phosphorylates EML3 at 'Thr-881' which is essential for its interaction with HAUS augmin-like complex and TUBG1. Phosphorylates CGAS during mitosis, leading to its inhibition, thereby preventing CGAS activation by self DNA during mitosis. Phosphorylates SKA3 during mitosis which promotes SKA3 binding to the NDC80 complex and anchoring of the SKA complex to kinetochores, to enable stable attachment of mitotic spindle microtubules to kinetochores. This Pongo abelii (Sumatran orangutan) protein is Cyclin-dependent kinase 1 (CDK1).